We begin with the raw amino-acid sequence, 182 residues long: Adenine phosphoribosyltransferase (182 aa).

The protein belongs to the purine/pyrimidine phosphoribosyltransferase family. In terms of assembly, homodimer.

The protein resides in the cytoplasm. It carries out the reaction AMP + diphosphate = 5-phospho-alpha-D-ribose 1-diphosphate + adenine. It participates in purine metabolism; AMP biosynthesis via salvage pathway; AMP from adenine: step 1/1. Functionally, catalyzes a salvage reaction resulting in the formation of AMP, that is energically less costly than de novo synthesis. This Pseudomonas entomophila (strain L48) protein is Adenine phosphoribosyltransferase.